The sequence spans 88 residues: Small ribosomal subunit protein uS15 (88 aa).

Belongs to the universal ribosomal protein uS15 family. Part of the 30S ribosomal subunit. Forms a bridge to the 50S subunit in the 70S ribosome, contacting the 23S rRNA.

Functionally, one of the primary rRNA binding proteins, it binds directly to 16S rRNA where it helps nucleate assembly of the platform of the 30S subunit by binding and bridging several RNA helices of the 16S rRNA. In terms of biological role, forms an intersubunit bridge (bridge B4) with the 23S rRNA of the 50S subunit in the ribosome. The sequence is that of Small ribosomal subunit protein uS15 from Trichlorobacter lovleyi (strain ATCC BAA-1151 / DSM 17278 / SZ) (Geobacter lovleyi).